The chain runs to 491 residues: Chromosomal replication initiator protein DnaA (491 aa).

The tract at residues 1 to 69 is domain I, interacts with DnaA modulators; that stretch reads MTTWDKCLKK…TIQECHGNDL (69 aa). The domain II stretch occupies residues 69-154; that stretch reads LIIEYSNKKF…KEDEEYSFGL (86 aa). The domain III, AAA+ region stretch occupies residues 155-371; sequence PLKEKYVFDS…GALNRVLTTS (217 aa). Gly-199, Gly-201, Lys-202, and Thr-203 together coordinate ATP. A domain IV, binds dsDNA region spans residues 372–491; it reads KFNHKDPTIE…YELLLDKISR (120 aa).

The protein belongs to the DnaA family. In terms of assembly, oligomerizes as a right-handed, spiral filament on DNA at oriC.

The protein localises to the cytoplasm. Functionally, plays an essential role in the initiation and regulation of chromosomal replication. ATP-DnaA binds to the origin of replication (oriC) to initiate formation of the DNA replication initiation complex once per cell cycle. Binds the DnaA box (a 9 base pair repeat at the origin) and separates the double-stranded (ds)DNA. Forms a right-handed helical filament on oriC DNA; dsDNA binds to the exterior of the filament while single-stranded (ss)DNA is stabiized in the filament's interior. The ATP-DnaA-oriC complex binds and stabilizes one strand of the AT-rich DNA unwinding element (DUE), permitting loading of DNA polymerase. After initiation quickly degrades to an ADP-DnaA complex that is not apt for DNA replication. Binds acidic phospholipids. The sequence is that of Chromosomal replication initiator protein DnaA from Francisella tularensis subsp. holarctica (strain OSU18).